We begin with the raw amino-acid sequence, 308 residues long: tRNA dimethylallyltransferase (308 aa).

An ATP-binding site is contributed by Gly-10 to Thr-17. Thr-12–Thr-17 contacts substrate. 2 interaction with substrate tRNA regions span residues Asp-35–Leu-38 and Gln-159–Arg-163.

This sequence belongs to the IPP transferase family. As to quaternary structure, monomer. The cofactor is Mg(2+).

The enzyme catalyses adenosine(37) in tRNA + dimethylallyl diphosphate = N(6)-dimethylallyladenosine(37) in tRNA + diphosphate. In terms of biological role, catalyzes the transfer of a dimethylallyl group onto the adenine at position 37 in tRNAs that read codons beginning with uridine, leading to the formation of N6-(dimethylallyl)adenosine (i(6)A). The protein is tRNA dimethylallyltransferase of Francisella tularensis subsp. novicida (strain U112).